Consider the following 204-residue polypeptide: 3-isopropylmalate dehydratase small subunit (204 aa).

This sequence belongs to the LeuD family. LeuD type 1 subfamily. In terms of assembly, heterodimer of LeuC and LeuD.

It catalyses the reaction (2R,3S)-3-isopropylmalate = (2S)-2-isopropylmalate. It participates in amino-acid biosynthesis; L-leucine biosynthesis; L-leucine from 3-methyl-2-oxobutanoate: step 2/4. Its function is as follows. Catalyzes the isomerization between 2-isopropylmalate and 3-isopropylmalate, via the formation of 2-isopropylmaleate. The sequence is that of 3-isopropylmalate dehydratase small subunit from Ruthia magnifica subsp. Calyptogena magnifica.